Here is a 211-residue protein sequence, read N- to C-terminus: Ras-related protein RABB1c (211 aa).

S2 carries the N-acetylserine modification. 13-21 contacts GTP; that stretch reads GDTGVGKSC. The Effector region signature appears at 35–43; sequence HDLTIGVEF. GTP-binding positions include 61 to 65, 119 to 122, and 149 to 151; these read DTAGQ, NKCD, and SAK. Residues C209 and C210 are each lipidated (S-geranylgeranyl cysteine).

This sequence belongs to the small GTPase superfamily. Rab family.

It is found in the cell membrane. Intracellular vesicle trafficking and protein transport. This is Ras-related protein RABB1c (RABB1C) from Arabidopsis thaliana (Mouse-ear cress).